Here is a 386-residue protein sequence, read N- to C-terminus: Sulfate adenylyltransferase (386 aa).

The protein belongs to the sulfate adenylyltransferase family.

It carries out the reaction sulfate + ATP + H(+) = adenosine 5'-phosphosulfate + diphosphate. The protein operates within sulfur metabolism; hydrogen sulfide biosynthesis; sulfite from sulfate: step 1/3. The chain is Sulfate adenylyltransferase from Persephonella marina (strain DSM 14350 / EX-H1).